A 138-amino-acid polypeptide reads, in one-letter code: Large ribosomal subunit protein uL16 (138 aa).

It belongs to the universal ribosomal protein uL16 family. Part of the 50S ribosomal subunit.

Binds 23S rRNA and is also seen to make contacts with the A and possibly P site tRNAs. This chain is Large ribosomal subunit protein uL16, found in Neisseria gonorrhoeae (strain ATCC 700825 / FA 1090).